Here is a 33-residue protein sequence, read N- to C-terminus: Photosystem II reaction center protein Psb30 (33 aa).

A helical membrane pass occupies residues 5 to 25; sequence VIAQPIVLGLIVASGPLVIVS.

The protein belongs to the Psb30/Ycf12 family. As to quaternary structure, PSII is composed of 1 copy each of membrane proteins PsbA, PsbB, PsbC, PsbD, PsbE, PsbF, PsbH, PsbI, PsbJ, PsbK, PsbL, PsbM, PsbT, PsbX, PsbY, PsbZ, Psb30/Ycf12, peripheral proteins of the oxygen-evolving complex and a large number of cofactors. It forms dimeric complexes.

Its subcellular location is the plastid membrane. Its function is as follows. A core subunit of photosystem II (PSII), probably helps stabilize the reaction center. The sequence is that of Photosystem II reaction center protein Psb30 from Aneura mirabilis (Parasitic liverwort).